We begin with the raw amino-acid sequence, 445 residues long: Damage suppressor protein (445 aa).

Polar residues-rich tracts occupy residues 1–15 (MASTHQSSTEPSSTG) and 25–47 (SQGSGQDSKNVTVTKGTGSSATS). Disordered stretches follow at residues 1–145 (MAST…HSVI) and 203–445 (YHSV…RKRK). Residues 61–73 (SSTTAGSSSTQGQ) show a composition bias toward low complexity. Residues 74–87 (KFSTTPTDPKTFSS) show a composition bias toward polar residues. Basic and acidic residues predominate over residues 88–97 (DQKEKSKSPA). A compositionally biased stretch (low complexity) spans 117-138 (DAKSSGQSQGQSKDSGKSSSDS). A compositionally biased stretch (basic and acidic residues) spans 207 to 228 (VGDKTDDKKEGEHSGDKKDDSK). A required and sufficient for DNA-binding and co-localization with nuclear DNA region spans residues 208 to 445 (GDKTDDKKEG…GGKAGGRKRK (238 aa)). Residues 245–256 (ETSGQAESSSGN) show a composition bias toward polar residues. The span at 257 to 306 (EGAAPAKGRGRGRPPAAAKGVAKGAAKGAAASKGAKSGAESSKGGEQSSG) shows a compositional bias: low complexity. Residues 329 to 338 (GEGGASGSEG) show a composition bias toward gly residues. The interval 360-445 (EPPRRSSRLT…GGKAGGRKRK (86 aa)) is required for nucleosome binding and for the protection of chromatin from hydroxyl radical-mediated DNA damage. Over residues 367–431 (RLTSSGTGAG…ASKAPQNGAG (65 aa)) the composition is skewed to low complexity. A compositionally biased stretch (basic residues) spans 432–445 (AKKKGGKAGGRKRK).

The protein resides in the nucleus. In terms of biological role, unique chromatin-associating protein that contributes to the organism's exceptional tolerance to harsh environmental stresses. Binds with a higher affinity to nucleosomes than to free DNA. Protects chromatin from damage caused by hydroxyl radical-mediated cleavage induced by X-rays or treatment with hydrogen peroxide. Suppresses X-ray-induced DNA damage that includes single-strand breaks (SSBs) as well as more hazardous double-strand breaks (DSBs), and improves radiotolerance. Also shields DNA against reactive oxygen species (ROS). The chain is Damage suppressor protein from Ramazzottius varieornatus (Water bear).